The primary structure comprises 568 residues: Polyprotein P2A (568 aa).

The next 2 membrane-spanning stretches (helical) occupy residues 10 to 30 (KSVM…ISVA) and 41 to 61 (TLIC…CAVC). Residues 129–326 (VENSRLQPLE…TVENSELYPD (198 aa)) enclose the Peptidase S39 domain. Residues histidine 176, aspartate 209, and serine 276 each act as for protease activity in the active site. At threonine 339 the chain carries Phosphothreonine; by host. Phosphoserine; by host is present on serine 390. Disordered regions lie at residues 403–435 (LNYQ…ESSI) and 469–568 (SSQN…ATSK). Composition is skewed to polar residues over residues 419-435 (NLSS…ESSI) and 469-478 (SSQNSKSSLG). A compositionally biased stretch (basic and acidic residues) spans 481 to 502 (ADRKQKSDRSSSKPEGLKESKR). Over residues 507 to 516 (NWQSLTSKPS) the composition is skewed to polar residues. Residues 539-549 (KSKRSRTRGKS) are compositionally biased toward basic residues. Residues 554–568 (VPASPSPKSGSATSK) are compositionally biased toward polar residues.

It localises to the host membrane. Responsible for cleavages of polyprotein P2A and replicase polyprotein P2AB. In terms of biological role, covalently attached to the 5' extremity of the genomic and subgenomic RNAs. It may serve as a primer for the replicase. The sequence is that of Polyprotein P2A from Cocksfoot mottle virus (isolate Dactylis glomerata/Norway/CfMV-NO/1995) (CfMV).